A 259-amino-acid chain; its full sequence is Global transcriptional regulator CodY (259 aa).

The tract at residues 1-155 (MNLLEKTRKI…GATVVGMEIL (155 aa)) is GAF domain. Positions 203 to 222 (ASKIADRVGITRSVIVNALR) form a DNA-binding region, H-T-H motif. Serine 215 is modified (phosphoserine).

It belongs to the CodY family.

It is found in the cytoplasm. In terms of biological role, DNA-binding global transcriptional regulator which is involved in the adaptive response to starvation and acts by directly or indirectly controlling the expression of numerous genes in response to nutrient availability. During rapid exponential growth, CodY is highly active and represses genes whose products allow adaptation to nutrient depletion. In Lysinibacillus sphaericus (strain C3-41), this protein is Global transcriptional regulator CodY.